Consider the following 227-residue polypeptide: PKHD-type hydroxylase Bcen_3557 (227 aa).

Residues Lys78–Ser178 form the Fe2OG dioxygenase domain. Fe cation contacts are provided by His96, Asp98, and His159. Residue Arg169 participates in 2-oxoglutarate binding.

The cofactor is Fe(2+). It depends on L-ascorbate as a cofactor.

The protein is PKHD-type hydroxylase Bcen_3557 of Burkholderia orbicola (strain AU 1054).